The following is a 181-amino-acid chain: uncharacterized protein (181 aa).

The next 4 membrane-spanning stretches (helical) occupy residues 3–23, 67–87, 92–112, and 159–179; these read LSQTALFIGSIINLNALVLIL, ALLLIFIIGMLKGIIYFGLSV, VLGVLTVLKSIGLAIFYVLFI, and MFILLFLNNFMLDLLGGLWII.

The protein belongs to the YggT family.

It is found in the cell membrane. This is an uncharacterized protein from Haemophilus influenzae (strain ATCC 51907 / DSM 11121 / KW20 / Rd).